The sequence spans 183 residues: Translation initiation factor IF-3 (183 aa).

The protein belongs to the IF-3 family. As to quaternary structure, monomer.

The protein localises to the cytoplasm. In terms of biological role, IF-3 binds to the 30S ribosomal subunit and shifts the equilibrium between 70S ribosomes and their 50S and 30S subunits in favor of the free subunits, thus enhancing the availability of 30S subunits on which protein synthesis initiation begins. This is Translation initiation factor IF-3 from Pseudomonas putida (strain W619).